A 213-amino-acid chain; its full sequence is MAAPAVSGVSQQVRYFGTSVVRPFAKLVRPPVQVYGVEGRYATALYSAASKQKKLEQVEKELLRVAQILKEPKVAASVLNPYVKHSIKVKSLSDIIAKERFSPLTTNLINLLAENGRLSNTQGVVSAFSTMMSVHRGEVPCTVTTASPLEEATLSELKTVLKSFLSQGQILKLEVKTDPSIMGGMIVRIGEKYVDMSAKTKIQKLSKAMREVI.

The transit peptide at 1-23 directs the protein to the mitochondrion; it reads MAAPAVSGVSQQVRYFGTSVVRP. The short motif at 5 to 23 is the SIFI-degron element; sequence AVSGVSQQVRYFGTSVVRP. Lys54, Lys60, Lys70, and Lys73 each carry N6-acetyllysine. Lys90 carries the post-translational modification N6-succinyllysine. N6-acetyllysine; alternate is present on residues Lys158 and Lys162. N6-succinyllysine; alternate is present on residues Lys158 and Lys162. 3 positions are modified to N6-acetyllysine: Lys172, Lys176, and Lys192. The residue at position 199 (Lys199) is an N6-succinyllysine.

Belongs to the ATPase delta chain family. In terms of assembly, component of the ATP synthase complex composed at least of ATP5F1A/subunit alpha, ATP5F1B/subunit beta, ATP5MC1/subunit c (homooctomer), MT-ATP6/subunit a, MT-ATP8/subunit 8, ATP5ME/subunit e, ATP5MF/subunit f, ATP5MG/subunit g, ATP5MK/subunit k, ATP5MJ/subunit j, ATP5F1C/subunit gamma, ATP5F1D/subunit delta, ATP5F1E/subunit epsilon, ATP5PF/subunit F6, ATP5PB/subunit b, ATP5PD/subunit d, ATP5PO/subunit OSCP. ATP synthase complex consists of a soluble F(1) head domain (subunits alpha(3) and beta(3)) - the catalytic core - and a membrane F(0) domain - the membrane proton channel (subunits c, a, 8, e, f, g, k and j). These two domains are linked by a central stalk (subunits gamma, delta, and epsilon) rotating inside the F1 region and a stationary peripheral stalk (subunits F6, b, d, and OSCP). Post-translationally, acetylation at Lys-162 decreases ATP production. Deacetylated by SIRT3. In response to mitochondrial stress, the precursor protein is ubiquitinated by the SIFI complex in the cytoplasm before mitochondrial import, leading to its degradation. Within the SIFI complex, UBR4 initiates ubiquitin chain that are further elongated or branched by KCMF1.

Its subcellular location is the mitochondrion. The protein resides in the mitochondrion inner membrane. Functionally, subunit OSCP, of the mitochondrial membrane ATP synthase complex (F(1)F(0) ATP synthase or Complex V) that produces ATP from ADP in the presence of a proton gradient across the membrane which is generated by electron transport complexes of the respiratory chain. ATP synthase complex consist of a soluble F(1) head domain - the catalytic core - and a membrane F(1) domain - the membrane proton channel. These two domains are linked by a central stalk rotating inside the F(1) region and a stationary peripheral stalk. During catalysis, ATP synthesis in the catalytic domain of F(1) is coupled via a rotary mechanism of the central stalk subunits to proton translocation. In vivo, can only synthesize ATP although its ATP hydrolase activity can be activated artificially in vitro. Part of the complex F(0) domain. Part of the complex F(0) domain and the peripheric stalk, which acts as a stator to hold the catalytic alpha(3)beta(3) subcomplex and subunit a/ATP6 static relative to the rotary elements. This chain is ATP synthase peripheral stalk subunit OSCP, mitochondrial, found in Callithrix jacchus (White-tufted-ear marmoset).